Reading from the N-terminus, the 413-residue chain is Phosphatidylcholine:ceramide cholinephosphotransferase 1 (413 aa).

Positions 7-70 (WSPKKVADWL…LDMIETLKME (64 aa)) constitute an SAM domain. Position 8 is a phosphoserine (serine 8). 5 helical membrane passes run 136–156 (FLAF…ISVV), 184–204 (FSIC…QWLL), 215–235 (FFCI…VTTL), 276–296 (MCGD…YLFI), and 304–324 (LWWY…CILL). Histidine 285 is a catalytic residue. Residues 325-413 (AHDHYTVDVV…VKYSRLVNDT (89 aa)) lie on the Cytoplasmic side of the membrane. Catalysis depends on residues histidine 328 and aspartate 332.

The protein belongs to the sphingomyelin synthase family. In terms of tissue distribution, brain, heart, kidney, liver, muscle and stomach.

It localises to the golgi apparatus membrane. It catalyses the reaction an N-acylsphing-4-enine + a 1,2-diacyl-sn-glycero-3-phosphocholine = a sphingomyelin + a 1,2-diacyl-sn-glycerol. The enzyme catalyses an N-acylsphinganine + a 1,2-diacyl-sn-glycero-3-phosphocholine = an N-acylsphinganine-1-phosphocholine + a 1,2-diacyl-sn-glycerol. It carries out the reaction an N-acyl-(4R)-4-hydroxysphinganine + a 1,2-diacyl-sn-glycero-3-phosphocholine = an N-acyl-(4R)-4-hydroxysphinganine-phosphocholine + a 1,2-diacyl-sn-glycerol. The catalysed reaction is 1-(9Z-octadecenoyl)-2-acyl-sn-3-glycerol + a sphingomyelin = a 1-(9Z-octadecenoyl)-2-acyl-sn-glycero-3-phosphocholine + an N-acylsphing-4-enine. It catalyses the reaction N-hexadecanoylsphinganine + a 1,2-diacyl-sn-glycero-3-phosphocholine = N-hexadecanoyl-sphinganine-1-phosphocholine + a 1,2-diacyl-sn-glycerol. The enzyme catalyses N-hexadecanoyl-(4R)-hydroxysphinganine + a 1,2-diacyl-sn-glycero-3-phosphocholine = N-hexadecanoyl-(4R)-hydroxysphinganine-phosphocholine + a 1,2-diacyl-sn-glycerol. It carries out the reaction an N-acylsphing-4-enine + a 1,2-diacyl-sn-glycero-3-phosphoethanolamine = an N-acylsphing-4-enine 1-phosphoethanolamine + a 1,2-diacyl-sn-glycerol. It participates in sphingolipid metabolism. Its activity is regulated as follows. Inhibited by bacterial PC-phospholipase C inhibitor D609. Functionally, major sphingomyelin synthase at the Golgi apparatus. Catalyzes the reversible transfer of phosphocholine moiety in sphingomyelin biosynthesis: in the forward reaction transfers phosphocholine head group of phosphatidylcholine (PC) on to ceramide (CER) to form ceramide phosphocholine (sphingomyelin, SM) and diacylglycerol (DAG) as by-product, and in the reverse reaction transfers phosphocholine from SM to DAG to form PC and CER. The direction of the reaction depends on the levels of CER and DAG in Golgi membranes. Converts the newly synthesized CER, that is transported from the endoplasmic reticulum to the trans-Golgi by the Cer transport protein (CERT), to SM. Can form a heteromeric complex with glucosylceramide synthase (GCS) increasing SMS activity and reducing glucosylceramide synthesis, a critical mechanism that controls the metabolic fate of CER in the Golgi. Does not use free phosphorylcholine or CDP-choline as donor. Can also transfer phosphoethanolamine head group of phosphatidylethanolamine (PE) on to CER to form ceramide phosphoethanolamine (CPE). Regulates receptor-mediated signal transduction via mitogenic DAG and proapoptotic CER, as well as via SM, a structural component of membrane rafts that serve as platforms for signal transduction and protein sorting. Plays a role in secretory transport via regulation of DAG pool at the Golgi apparatus and its downstream effects on PRKD1. The polypeptide is Phosphatidylcholine:ceramide cholinephosphotransferase 1 (SGMS1) (Homo sapiens (Human)).